The primary structure comprises 491 residues: Putative ABC transporter ATP-binding protein TDE_0906 (491 aa).

ABC transporter domains are found at residues 2–241 (INLN…KQGL) and 267–491 (LTLH…KERL). ATP contacts are provided by residues 36–43 (GKSGCGKT) and 300–307 (GKNGCGKT).

It belongs to the ABC transporter superfamily.

It is found in the cell inner membrane. Functionally, probably part of an ABC transporter complex. Responsible for energy coupling to the transport system. The chain is Putative ABC transporter ATP-binding protein TDE_0906 from Treponema denticola (strain ATCC 35405 / DSM 14222 / CIP 103919 / JCM 8153 / KCTC 15104).